The chain runs to 934 residues: Coiled-coil domain-containing protein 39 (934 aa).

Coiled coils occupy residues 17–133 (IPVA…DGLK), 164–512 (SQQD…HNDL), 540–615 (VDRS…SQIR), and 664–826 (VIKA…EQDI). A disordered region spans residues 866–934 (LPTAKGPSSR…NIPKGKKLNK (69 aa)). Low complexity predominate over residues 873–892 (SSRSSSQSSLSSIRSLEDSI). Residues serine 887 and serine 895 each carry the phosphoserine modification. Residues 912–925 (RSDSSRSSSGSNSN) are compositionally biased toward low complexity.

Belongs to the CCDC39 family.

The protein resides in the cytoplasm. It is found in the cytoskeleton. The protein localises to the cilium axoneme. Functionally, required for assembly of dynein regulatory complex (DRC) and inner dynein arm (IDA) complexes, which are responsible for ciliary beat regulation, thereby playing a central role in motility in cilia and flagella. Probably acts together with CCDC40 to form a molecular ruler that determines the 96 nanometer (nm) repeat length and arrangements of components in cilia and flagella. Not required for outer dynein arm complexes assembly. The protein is Coiled-coil domain-containing protein 39 (Ccdc39) of Rattus norvegicus (Rat).